The sequence spans 279 residues: Thymidylate synthase (279 aa).

DUMP is bound at residue 132–133 (RR). C153 acts as the Nucleophile in catalysis. Residues 178–181 (RSND), N189, and 219–221 (HIY) contribute to the dUMP site. A (6R)-5,10-methylene-5,6,7,8-tetrahydrofolate-binding site is contributed by D181. A278 contacts (6R)-5,10-methylene-5,6,7,8-tetrahydrofolate.

This sequence belongs to the thymidylate synthase family. Bacterial-type ThyA subfamily. Homodimer.

The protein resides in the cytoplasm. It carries out the reaction dUMP + (6R)-5,10-methylene-5,6,7,8-tetrahydrofolate = 7,8-dihydrofolate + dTMP. Its pathway is pyrimidine metabolism; dTTP biosynthesis. In terms of biological role, catalyzes the reductive methylation of 2'-deoxyuridine-5'-monophosphate (dUMP) to 2'-deoxythymidine-5'-monophosphate (dTMP) while utilizing 5,10-methylenetetrahydrofolate (mTHF) as the methyl donor and reductant in the reaction, yielding dihydrofolate (DHF) as a by-product. This enzymatic reaction provides an intracellular de novo source of dTMP, an essential precursor for DNA biosynthesis. This is Thymidylate synthase from Lactococcus lactis subsp. lactis (strain IL1403) (Streptococcus lactis).